The chain runs to 127 residues: Ribonuclease VapC6 (127 aa).

The 95-residue stretch at 26–120 folds into the PINc domain; it reads EPQRAEFCRS…ERHLPDIRVR (95 aa). Asp-86 contacts Mg(2+).

Belongs to the PINc/VapC protein family. Mg(2+) serves as cofactor.

Toxic component of a type II toxin-antitoxin (TA) system. An RNase. The cognate antitoxin is VapB6. The sequence is that of Ribonuclease VapC6 from Mycobacterium tuberculosis (strain CDC 1551 / Oshkosh).